The chain runs to 178 residues: Alkyl hydroperoxide reductase AhpD (178 aa).

Cys130 acts as the Proton donor in catalysis. Cys130 and Cys133 form a disulfide bridge. Cys133 serves as the catalytic Cysteine sulfenic acid (-SOH) intermediate.

The protein belongs to the AhpD family. Homotrimer.

The catalysed reaction is N(6)-[(R)-dihydrolipoyl]-L-lysyl-[lipoyl-carrier protein] + a hydroperoxide = N(6)-[(R)-lipoyl]-L-lysyl-[lipoyl-carrier protein] + an alcohol + H2O. Functionally, antioxidant protein with alkyl hydroperoxidase activity. Required for the reduction of the AhpC active site cysteine residues and for the regeneration of the AhpC enzyme activity. In Mycolicibacterium paratuberculosis (strain ATCC BAA-968 / K-10) (Mycobacterium paratuberculosis), this protein is Alkyl hydroperoxide reductase AhpD.